A 327-amino-acid polypeptide reads, in one-letter code: Acetyl-coenzyme A carboxylase carboxyl transferase subunit beta (327 aa).

A CoA carboxyltransferase N-terminal domain is found at 24–293; it reads LWIKCPDTGQ…LTVTTAVEAP (270 aa). The segment covering 293-311 has biased composition (low complexity); the sequence is PAEAAAKAEPEATTTEQPV. Residues 293-327 are disordered; that stretch reads PAEAAAKAEPEATTTEQPVAPAPTEPPAQPAAPQA. The span at 312–327 shows a compositional bias: pro residues; that stretch reads APAPTEPPAQPAAPQA.

It belongs to the AccD/PCCB family. Acetyl-CoA carboxylase is a heterohexamer composed of biotin carboxyl carrier protein (AccB), biotin carboxylase (AccC) and two subunits each of ACCase subunit alpha (AccA) and ACCase subunit beta (AccD).

Its subcellular location is the cytoplasm. It carries out the reaction N(6)-carboxybiotinyl-L-lysyl-[protein] + acetyl-CoA = N(6)-biotinyl-L-lysyl-[protein] + malonyl-CoA. The protein operates within lipid metabolism; malonyl-CoA biosynthesis; malonyl-CoA from acetyl-CoA: step 1/1. Its function is as follows. Component of the acetyl coenzyme A carboxylase (ACC) complex. Biotin carboxylase (BC) catalyzes the carboxylation of biotin on its carrier protein (BCCP) and then the CO(2) group is transferred by the transcarboxylase to acetyl-CoA to form malonyl-CoA. This chain is Acetyl-coenzyme A carboxylase carboxyl transferase subunit beta, found in Rhodopseudomonas palustris (strain TIE-1).